The sequence spans 116 residues: Nucleoid-associated protein MLBr02330 (116 aa).

A disordered region spans residues 96–116; it reads LTSAMRPTAPPPTPPTYMAGT.

This sequence belongs to the YbaB/EbfC family. Homodimer.

Its subcellular location is the cytoplasm. The protein localises to the nucleoid. Functionally, binds to DNA and alters its conformation. May be involved in regulation of gene expression, nucleoid organization and DNA protection. This chain is Nucleoid-associated protein MLBr02330, found in Mycobacterium leprae (strain Br4923).